Here is a 425-residue protein sequence, read N- to C-terminus: tRNA (guanine-N(7)-)-methyltransferase non-catalytic subunit wuho (425 aa).

The disordered stretch occupies residues 67 to 102; that stretch reads ATCAGKEPGGKEQQLTKQPEEGGTTASGSGVTSTSV. A compositionally biased stretch (low complexity) spans 88–102; sequence GGTTASGSGVTSTSV. WD repeat units follow at residues 97–138, 142–181, 185–224, 228–266, and 325–365; these read VTST…ARLL, PLAR…APPR, GHLS…DIHS, GHRE…ELLQ, and AGSW…PATS.

The protein belongs to the WD repeat TRM82 family. In terms of assembly, forms a heterodimer with the catalytic subunit Mettl1. Interacts with mei-P26 and weakly interacts with bgcn; required for the function or formation of the mei-P26-bgcn-bam-sxl complex. Interacts with nanos; may be involved in mei-P26-dependent derepression of the BMP signaling pathway. Interacts with Myc; the interaction may be mediated by mei-P26 and may be involved in the regulation of ribosome biogenesis. As to expression, in testis, it is present at high level in hub cells, a niche for germline stem cells of testis. Ubiquitously expressed in all testicular cells throughout spermatogenesis. Ubiquitously expressed in all germline and somatic cells of the ovary.

Its subcellular location is the nucleus. The protein resides in the cytoplasm. Its pathway is tRNA modification; N(7)-methylguanine-tRNA biosynthesis. In terms of biological role, required for the Mettl1-dependent formation of N(7)-methylguanine at position 46 (m7G46) in tRNA. In the Mettl1-wuho methyltransferase complex, it is required to stabilize and induce conformational changes of the catalytic subunit. Required for binding of nanos mRNA and repression of translation by the mei-P26-bgcn-bam-sxl complex. May cooperate with mei-P26 and nanos to derepress the BMP signaling pathway. May cooperate with mei-P26 to suppress expression of a subset of microRNAs. May cooperate with mei-P26 to regulate bam expression levels in germline cells during gametogenesis. Required to promote mitosis to meiosis transition during gametogenesis. May regulate germline cell division in part by regulating ribosome biogenesis. This is tRNA (guanine-N(7)-)-methyltransferase non-catalytic subunit wuho from Drosophila yakuba (Fruit fly).